Reading from the N-terminus, the 185-residue chain is Hypoxanthine/guanine phosphoribosyltransferase (185 aa).

Belongs to the purine/pyrimidine phosphoribosyltransferase family. Archaeal HPRT subfamily. In terms of assembly, homodimer.

The protein resides in the cytoplasm. The enzyme catalyses IMP + diphosphate = hypoxanthine + 5-phospho-alpha-D-ribose 1-diphosphate. It catalyses the reaction GMP + diphosphate = guanine + 5-phospho-alpha-D-ribose 1-diphosphate. The protein operates within purine metabolism; IMP biosynthesis via salvage pathway; IMP from hypoxanthine: step 1/1. Catalyzes a salvage reaction resulting in the formation of IMP that is energically less costly than de novo synthesis. This is Hypoxanthine/guanine phosphoribosyltransferase from Methanococcus maripaludis (strain C6 / ATCC BAA-1332).